A 129-amino-acid polypeptide reads, in one-letter code: Small ribosomal subunit protein uS9 (129 aa).

Positions 107 to 129 (SRVVERKKPGKKKARRSPQFSKR) are disordered. Positions 114 to 129 (KPGKKKARRSPQFSKR) are enriched in basic residues.

This sequence belongs to the universal ribosomal protein uS9 family.

This chain is Small ribosomal subunit protein uS9, found in Sulfurovum sp. (strain NBC37-1).